A 459-amino-acid polypeptide reads, in one-letter code: Cysteine--tRNA ligase (459 aa).

Cysteine 29 provides a ligand contact to Zn(2+). Residues 31 to 41 (MTVYDLCHLGH) carry the 'HIGH' region motif. Positions 213, 238, and 242 each coordinate Zn(2+). The 'KMSKS' region signature appears at 270–274 (KMSKS). Position 273 (lysine 273) interacts with ATP.

Belongs to the class-I aminoacyl-tRNA synthetase family. Monomer. It depends on Zn(2+) as a cofactor.

It is found in the cytoplasm. It catalyses the reaction tRNA(Cys) + L-cysteine + ATP = L-cysteinyl-tRNA(Cys) + AMP + diphosphate. The chain is Cysteine--tRNA ligase from Albidiferax ferrireducens (strain ATCC BAA-621 / DSM 15236 / T118) (Rhodoferax ferrireducens).